Consider the following 158-residue polypeptide: NADPH-dependent 7-cyano-7-deazaguanine reductase (158 aa).

Cysteine 56 functions as the Thioimide intermediate in the catalytic mechanism. The Proton donor role is filled by aspartate 63. Residues 78 to 80 (VES) and 97 to 98 (HE) contribute to the substrate site.

This sequence belongs to the GTP cyclohydrolase I family. QueF type 1 subfamily.

It localises to the cytoplasm. The enzyme catalyses 7-aminomethyl-7-carbaguanine + 2 NADP(+) = 7-cyano-7-deazaguanine + 2 NADPH + 3 H(+). Its pathway is tRNA modification; tRNA-queuosine biosynthesis. In terms of biological role, catalyzes the NADPH-dependent reduction of 7-cyano-7-deazaguanine (preQ0) to 7-aminomethyl-7-deazaguanine (preQ1). This Rhodopseudomonas palustris (strain BisB5) protein is NADPH-dependent 7-cyano-7-deazaguanine reductase.